The chain runs to 424 residues: Arogenate dehydratase 4, chloroplastic (424 aa).

A chloroplast-targeting transit peptide spans 1–34; that stretch reads MQAATSCDLKFRSTDPTSRNKCFSHAIPKRVAVT. In terms of domain architecture, Prephenate dehydratase spans 126 to 303; sequence RVAYQGVPGA…NVTRFLMLAR (178 aa). An ACT domain is found at 319–410; it reads VFAAQEHKGT…SFLRVLGSYP (92 aa).

In terms of tissue distribution, expressed in roots, leaves, stems, flowers and siliques. More abundant in stems and roots.

The protein resides in the plastid. It is found in the chloroplast stroma. The enzyme catalyses L-arogenate + H(+) = L-phenylalanine + CO2 + H2O. It participates in amino-acid biosynthesis; L-phenylalanine biosynthesis; L-phenylalanine from L-arogenate: step 1/1. Converts the prephenate produced from the shikimate-chorismate pathway into phenylalanine. In Arabidopsis thaliana (Mouse-ear cress), this protein is Arogenate dehydratase 4, chloroplastic.